A 136-amino-acid chain; its full sequence is Large ribosomal subunit protein uL16 (136 aa).

This sequence belongs to the universal ribosomal protein uL16 family. As to quaternary structure, part of the 50S ribosomal subunit.

In terms of biological role, binds 23S rRNA and is also seen to make contacts with the A and possibly P site tRNAs. In Rickettsia typhi (strain ATCC VR-144 / Wilmington), this protein is Large ribosomal subunit protein uL16.